The following is a 450-amino-acid chain: 3-phosphoshikimate 1-carboxyvinyltransferase (450 aa).

Positions 23, 24, and 28 each coordinate 3-phosphoshikimate. K23 contributes to the phosphoenolpyruvate binding site. Positions 96 and 124 each coordinate phosphoenolpyruvate. 3-phosphoshikimate is bound by residues S167, S168, Q169, S196, E311, and H340. Q169 provides a ligand contact to phosphoenolpyruvate. E311 functions as the Proton acceptor in the catalytic mechanism. Phosphoenolpyruvate contacts are provided by R344, R385, and K410. A disordered region spans residues 426–450; the sequence is GQGWGYPQPRSGQRARRATGQGSGG.

Belongs to the EPSP synthase family. In terms of assembly, monomer.

It is found in the cytoplasm. The enzyme catalyses 3-phosphoshikimate + phosphoenolpyruvate = 5-O-(1-carboxyvinyl)-3-phosphoshikimate + phosphate. The protein operates within metabolic intermediate biosynthesis; chorismate biosynthesis; chorismate from D-erythrose 4-phosphate and phosphoenolpyruvate: step 6/7. Catalyzes the transfer of the enolpyruvyl moiety of phosphoenolpyruvate (PEP) to the 5-hydroxyl of shikimate-3-phosphate (S3P) to produce enolpyruvyl shikimate-3-phosphate and inorganic phosphate. In Mycobacterium bovis (strain ATCC BAA-935 / AF2122/97), this protein is 3-phosphoshikimate 1-carboxyvinyltransferase.